The primary structure comprises 294 residues: NAD kinase (294 aa).

The active-site Proton acceptor is the aspartate 74. NAD(+)-binding positions include 74–75 (DG), arginine 79, 149–150 (NE), aspartate 179, 190–195 (TGYSMS), and alanine 214.

Belongs to the NAD kinase family. A divalent metal cation is required as a cofactor.

The protein resides in the cytoplasm. The enzyme catalyses NAD(+) + ATP = ADP + NADP(+) + H(+). Its function is as follows. Involved in the regulation of the intracellular balance of NAD and NADP, and is a key enzyme in the biosynthesis of NADP. Catalyzes specifically the phosphorylation on 2'-hydroxyl of the adenosine moiety of NAD to yield NADP. In Flavobacterium psychrophilum (strain ATCC 49511 / DSM 21280 / CIP 103535 / JIP02/86), this protein is NAD kinase.